We begin with the raw amino-acid sequence, 504 residues long: Anaerobic nitric oxide reductase transcription regulator NorR (504 aa).

Aspartate 57 carries the 4-aspartylphosphate modification. Residues 187 to 416 enclose the Sigma-54 factor interaction domain; that stretch reads MIGLSPGMTQ…LEHAIHRAVV (230 aa). ATP is bound by residues 215-222 and 278-287; these read GETGTGKE and ADNGTLFLDE. The segment at residues 479 to 498 is a DNA-binding region (H-T-H motif); sequence WAACARMLETDVANLHRLAK.

The protein operates within nitrogen metabolism; nitric oxide reduction. Required for the expression of anaerobic nitric oxide (NO) reductase, acts as a transcriptional activator for at least the norVW operon. Activation also requires sigma-54. This chain is Anaerobic nitric oxide reductase transcription regulator NorR, found in Escherichia coli (strain K12 / MC4100 / BW2952).